The chain runs to 457 residues: Argininosuccinate lyase (457 aa).

The protein belongs to the lyase 1 family. Argininosuccinate lyase subfamily.

It is found in the cytoplasm. It carries out the reaction 2-(N(omega)-L-arginino)succinate = fumarate + L-arginine. Its pathway is amino-acid biosynthesis; L-arginine biosynthesis; L-arginine from L-ornithine and carbamoyl phosphate: step 3/3. The sequence is that of Argininosuccinate lyase from Haemophilus influenzae (strain ATCC 51907 / DSM 11121 / KW20 / Rd).